Here is a 396-residue protein sequence, read N- to C-terminus: NADH-quinone oxidoreductase subunit D (396 aa).

The protein belongs to the complex I 49 kDa subunit family. NDH-1 is composed of 14 different subunits. Subunits NuoB, C, D, E, F, and G constitute the peripheral sector of the complex.

The protein resides in the cell inner membrane. The enzyme catalyses a quinone + NADH + 5 H(+)(in) = a quinol + NAD(+) + 4 H(+)(out). NDH-1 shuttles electrons from NADH, via FMN and iron-sulfur (Fe-S) centers, to quinones in the respiratory chain. The immediate electron acceptor for the enzyme in this species is believed to be ubiquinone. Couples the redox reaction to proton translocation (for every two electrons transferred, four hydrogen ions are translocated across the cytoplasmic membrane), and thus conserves the redox energy in a proton gradient. In Bartonella bacilliformis (strain ATCC 35685 / KC583 / Herrer 020/F12,63), this protein is NADH-quinone oxidoreductase subunit D.